Here is a 621-residue protein sequence, read N- to C-terminus: Chaperone protein HtpG (621 aa).

An a; substrate-binding region spans residues 1–341 (MSNQEYTFQT…SEDLPLNVSR (341 aa)). The interval 342-547 (EILQQNKILA…GDEQNAMMAN (206 aa)) is b. The segment at 548 to 621 (FMRQMGQSVP…RLNSVLLKAL (74 aa)) is c.

It belongs to the heat shock protein 90 family. In terms of assembly, homodimer.

It localises to the cytoplasm. Functionally, molecular chaperone. Has ATPase activity. This is Chaperone protein HtpG from Helicobacter pylori (strain HPAG1).